Consider the following 189-residue polypeptide: Potassium-transporting ATPase KdpC subunit (189 aa).

A helical transmembrane segment spans residues 6-26; sequence PAILMLIIFTILCGGIYPAVV.

The protein belongs to the KdpC family. The system is composed of three essential subunits: KdpA, KdpB and KdpC.

The protein localises to the cell inner membrane. In terms of biological role, part of the high-affinity ATP-driven potassium transport (or Kdp) system, which catalyzes the hydrolysis of ATP coupled with the electrogenic transport of potassium into the cytoplasm. This subunit acts as a catalytic chaperone that increases the ATP-binding affinity of the ATP-hydrolyzing subunit KdpB by the formation of a transient KdpB/KdpC/ATP ternary complex. This chain is Potassium-transporting ATPase KdpC subunit, found in Geobacter sulfurreducens (strain ATCC 51573 / DSM 12127 / PCA).